We begin with the raw amino-acid sequence, 223 residues long: Ribonuclease 3 (223 aa).

The RNase III domain maps to 3–125 (LEKLQKKLGH…LIAAIYLDAG (123 aa)). Glu38 lines the Mg(2+) pocket. Asp42 is an active-site residue. Mg(2+) is bound by residues Asp111 and Glu114. The active site involves Glu114. The DRBM domain maps to 152–222 (DPKTRLQEFL…AQQAIEKLKI (71 aa)).

Belongs to the ribonuclease III family. In terms of assembly, homodimer. The cofactor is Mg(2+).

It localises to the cytoplasm. It catalyses the reaction Endonucleolytic cleavage to 5'-phosphomonoester.. Its function is as follows. Digests double-stranded RNA. Involved in the processing of primary rRNA transcript to yield the immediate precursors to the large and small rRNAs (23S and 16S). Processes some mRNAs, and tRNAs when they are encoded in the rRNA operon. Processes pre-crRNA and tracrRNA of type II CRISPR loci if present in the organism. In Histophilus somni (strain 2336) (Haemophilus somnus), this protein is Ribonuclease 3.